Consider the following 30-residue polypeptide: Trypsin inhibitor 2 (30 aa).

3 disulfide bridges follow: Cys-3-Cys-20, Cys-10-Cys-22, and Cys-16-Cys-29.

It belongs to the protease inhibitor I7 (squash-type serine protease inhibitor) family.

The protein localises to the secreted. Inhibits trypsin. The sequence is that of Trypsin inhibitor 2 from Luffa aegyptiaca (Sponge gourd).